Reading from the N-terminus, the 469-residue chain is tRNA(Ile)-lysidine synthase (469 aa).

26–31 (SGGPDS) is an ATP binding site.

Belongs to the tRNA(Ile)-lysidine synthase family.

It is found in the cytoplasm. It carries out the reaction cytidine(34) in tRNA(Ile2) + L-lysine + ATP = lysidine(34) in tRNA(Ile2) + AMP + diphosphate + H(+). Ligates lysine onto the cytidine present at position 34 of the AUA codon-specific tRNA(Ile) that contains the anticodon CAU, in an ATP-dependent manner. Cytidine is converted to lysidine, thus changing the amino acid specificity of the tRNA from methionine to isoleucine. The protein is tRNA(Ile)-lysidine synthase of Shouchella clausii (strain KSM-K16) (Alkalihalobacillus clausii).